A 359-amino-acid polypeptide reads, in one-letter code: Phospho-N-acetylmuramoyl-pentapeptide-transferase (359 aa).

Transmembrane regions (helical) follow at residues 3-23, 55-75, 80-100, 117-137, 156-176, 187-207, 231-251, 255-275, 280-300, and 334-354; these read QILI…PALI, VAII…GLAF, ISAS…VGFL, TAKT…ALGF, IATV…VVSA, LDGL…LITF, LAIV…WNAA, IFMG…ISVT, ILAV…VLQI, and FWLL…GEWL.

Belongs to the glycosyltransferase 4 family. MraY subfamily. Mg(2+) serves as cofactor.

The protein localises to the cell membrane. The enzyme catalyses UDP-N-acetyl-alpha-D-muramoyl-L-alanyl-gamma-D-glutamyl-meso-2,6-diaminopimeloyl-D-alanyl-D-alanine + di-trans,octa-cis-undecaprenyl phosphate = di-trans,octa-cis-undecaprenyl diphospho-N-acetyl-alpha-D-muramoyl-L-alanyl-D-glutamyl-meso-2,6-diaminopimeloyl-D-alanyl-D-alanine + UMP. Its pathway is cell wall biogenesis; peptidoglycan biosynthesis. Functionally, catalyzes the initial step of the lipid cycle reactions in the biosynthesis of the cell wall peptidoglycan: transfers peptidoglycan precursor phospho-MurNAc-pentapeptide from UDP-MurNAc-pentapeptide onto the lipid carrier undecaprenyl phosphate, yielding undecaprenyl-pyrophosphoryl-MurNAc-pentapeptide, known as lipid I. The polypeptide is Phospho-N-acetylmuramoyl-pentapeptide-transferase (Mycobacterium avium (strain 104)).